The chain runs to 137 residues: Large ribosomal subunit protein uL16 (137 aa).

Belongs to the universal ribosomal protein uL16 family. Part of the 50S ribosomal subunit.

Functionally, binds 23S rRNA and is also seen to make contacts with the A and possibly P site tRNAs. The sequence is that of Large ribosomal subunit protein uL16 from Spiroplasma citri.